A 225-amino-acid polypeptide reads, in one-letter code: Ribosomal RNA small subunit methyltransferase G (225 aa).

Residues Gly-96, Phe-101, 146–147 (AE), and Arg-160 each bind S-adenosyl-L-methionine.

Belongs to the methyltransferase superfamily. RNA methyltransferase RsmG family.

The protein resides in the cytoplasm. Specifically methylates the N7 position of a guanine in 16S rRNA. In Mycoplasma mobile (strain ATCC 43663 / 163K / NCTC 11711) (Mesomycoplasma mobile), this protein is Ribosomal RNA small subunit methyltransferase G.